The primary structure comprises 219 residues: MOB kinase activator-like 1 (219 aa).

Residues C79, C84, H161, and H166 each coordinate Zn(2+).

This sequence belongs to the MOB1/phocein family. As to quaternary structure, interacts with and activates trc and wts. In terms of processing, phosphorylated by wts/mats kinase complex. Activated by phosphorylation by Hippo (Hpo) kinase which increases its affinity and its ability to activate Warts (Wts) kinase. As to expression, ubiquitously expressed at low levels in developing tissues (at protein level).

It localises to the cytoplasm. Its subcellular location is the cytoskeleton. The protein localises to the microtubule organizing center. It is found in the centrosome. The protein resides in the nucleus. It localises to the cytosol. Its subcellular location is the cell membrane. Coactivator of Warts (Wts) kinase in the Hippo/SWH (Sav/Wts/Hpo)signaling pathway, a signaling pathway that plays a pivotal role in organ size control and tumor suppression by restricting proliferation and promoting apoptosis. The core of this pathway is composed of a kinase cascade wherein Hippo (Hpo), in complex with its regulatory protein Salvador (Sav), phosphorylates and activates Warts (Wts) in complex with its regulatory protein Mats, which in turn phosphorylates and inactivates the Yorkie (Yki)oncoprotein. The Hippo/SWH signaling pathway inhibits the activity of the transcriptional complex formed by Scalloped (sd) and Yki and the target genes of this pathway include cyclin-E (cycE), diap1 and bantam. Mats is essential for early development and is required for proper chromosomal segregation in developing embryos. This Drosophila melanogaster (Fruit fly) protein is MOB kinase activator-like 1.